The primary structure comprises 1758 residues: Y' element ATP-dependent helicase YJL225C (1758 aa).

The Helicase ATP-binding domain occupies 668-845 (EIYMADTPSV…LQRIGLTGLA (178 aa)). ATP is bound at residue 681 to 688 (APPGYGKT). A Helicase C-terminal domain is found at 900–1051 (ALKLLLALFE…EFYGLESKKG (152 aa)). Positions 1142–1360 (NVRTNATTNA…ATTTESTNAS (219 aa)) are enriched in low complexity. Residues 1142 to 1384 (NVRTNATTNA…RFHPVTDINK (243 aa)) are disordered. Over residues 1361–1384 (AKEDANKDGNAEDNRFHPVTDINK) the composition is skewed to basic and acidic residues.

This sequence belongs to the helicase family. Yeast subtelomeric Y' repeat subfamily.

Catalyzes DNA unwinding and is involved in telomerase-independent telomere maintenance. The chain is Y' element ATP-dependent helicase YJL225C from Saccharomyces cerevisiae (strain ATCC 204508 / S288c) (Baker's yeast).